A 301-amino-acid chain; its full sequence is 4-hydroxy-tetrahydrodipicolinate synthase (301 aa).

Pyruvate is bound at residue Thr55. Residue Tyr143 is the Proton donor/acceptor of the active site. Lys171 acts as the Schiff-base intermediate with substrate in catalysis. Pyruvate is bound at residue Ile213.

Belongs to the DapA family. As to quaternary structure, homotetramer; dimer of dimers.

It is found in the cytoplasm. The catalysed reaction is L-aspartate 4-semialdehyde + pyruvate = (2S,4S)-4-hydroxy-2,3,4,5-tetrahydrodipicolinate + H2O + H(+). It functions in the pathway amino-acid biosynthesis; L-lysine biosynthesis via DAP pathway; (S)-tetrahydrodipicolinate from L-aspartate: step 3/4. Catalyzes the condensation of (S)-aspartate-beta-semialdehyde [(S)-ASA] and pyruvate to 4-hydroxy-tetrahydrodipicolinate (HTPA). In Psychrobacter arcticus (strain DSM 17307 / VKM B-2377 / 273-4), this protein is 4-hydroxy-tetrahydrodipicolinate synthase.